The following is a 679-amino-acid chain: DNA ligase (679 aa).

Residues D36–D40 and S94–L95 contribute to the NAD(+) site. K126 (N6-AMP-lysine intermediate) is an active-site residue. NAD(+) contacts are provided by R147, E181, K299, and K323. Zn(2+) is bound by residues C415, C418, C433, and C438. The 77-residue stretch at I603–E679 folds into the BRCT domain.

This sequence belongs to the NAD-dependent DNA ligase family. LigA subfamily. The cofactor is Mg(2+). Mn(2+) serves as cofactor.

It carries out the reaction NAD(+) + (deoxyribonucleotide)n-3'-hydroxyl + 5'-phospho-(deoxyribonucleotide)m = (deoxyribonucleotide)n+m + AMP + beta-nicotinamide D-nucleotide.. Functionally, DNA ligase that catalyzes the formation of phosphodiester linkages between 5'-phosphoryl and 3'-hydroxyl groups in double-stranded DNA using NAD as a coenzyme and as the energy source for the reaction. It is essential for DNA replication and repair of damaged DNA. The protein is DNA ligase of Mycoplasmopsis pulmonis (strain UAB CTIP) (Mycoplasma pulmonis).